We begin with the raw amino-acid sequence, 355 residues long: Tetraacyldisaccharide 4'-kinase (355 aa).

Thr49–Thr56 is an ATP binding site.

Belongs to the LpxK family.

It carries out the reaction a lipid A disaccharide + ATP = a lipid IVA + ADP + H(+). It functions in the pathway glycolipid biosynthesis; lipid IV(A) biosynthesis; lipid IV(A) from (3R)-3-hydroxytetradecanoyl-[acyl-carrier-protein] and UDP-N-acetyl-alpha-D-glucosamine: step 6/6. In terms of biological role, transfers the gamma-phosphate of ATP to the 4'-position of a tetraacyldisaccharide 1-phosphate intermediate (termed DS-1-P) to form tetraacyldisaccharide 1,4'-bis-phosphate (lipid IVA). This chain is Tetraacyldisaccharide 4'-kinase, found in Chlorobium luteolum (strain DSM 273 / BCRC 81028 / 2530) (Pelodictyon luteolum).